Consider the following 321-residue polypeptide: NADH-ubiquinone oxidoreductase chain 1 (321 aa).

8 helical membrane passes run 7-27 (ITNS…LTLM), 73-93 (ILLI…WTPI), 104-124 (LGLL…LWAG), 148-168 (VTLG…TMQL), 175-195 (HTWL…STLA), 227-247 (FFLA…ILFI), 256-276 (ELFL…FLWI), and 297-317 (LPLT…ISGI).

Belongs to the complex I subunit 1 family.

The protein resides in the mitochondrion inner membrane. It catalyses the reaction a ubiquinone + NADH + 5 H(+)(in) = a ubiquinol + NAD(+) + 4 H(+)(out). Functionally, core subunit of the mitochondrial membrane respiratory chain NADH dehydrogenase (Complex I) that is believed to belong to the minimal assembly required for catalysis. Complex I functions in the transfer of electrons from NADH to the respiratory chain. The immediate electron acceptor for the enzyme is believed to be ubiquinone. The sequence is that of NADH-ubiquinone oxidoreductase chain 1 (MT-ND1) from Varanus dumerilii (Dumeril's monitor).